Reading from the N-terminus, the 73-residue chain is Putative ORF9c protein (73 aa).

Residues 47 to 67 (AAVGELLLLEWLAMAVMLLLL) traverse the membrane as a helical segment.

It localises to the membrane. Functionally, may induce apoptosis in cardiomyocytes when overexpressed ex-vivo. In Homo sapiens (Human), this protein is Putative ORF9c protein.